The primary structure comprises 330 residues: GRB2-related adapter protein 2 (330 aa).

In terms of domain architecture, SH3 1 spans 1–56; sequence MEAVAKFDFTASGEDELSFHTGDVLKILSNQEEWFKAELGSQEGYVPKNFIDIQFP. Position 45 is a phosphotyrosine (Tyr-45). The region spanning 58 to 149 is the SH2 domain; it reads WFHEGLSRHQ…QKQIFLRDRT (92 aa). Lys-106 carries the post-translational modification N6-acetyllysine. Residues 143–244 form a disordered region; the sequence is IFLRDRTRED…GSLDINDGHC (102 aa). The span at 144–164 shows a compositional bias: basic and acidic residues; the sequence is FLRDRTREDQGHRGNSLDRRS. The residue at position 187 (Ser-187) is a Phosphoserine. Residues 209–222 are compositionally biased toward low complexity; it reads PAPQQLQQPPQQRY. Ser-236 carries the phosphoserine modification. Thr-262 is subject to Phosphothreonine. The SH3 2 domain occupies 271-330; the sequence is GRVRWARALYDFEALEDDELGFHSGEVVEVLDSSNPSWWTGRLHNKLGLFPANYVAPMTR.

Belongs to the GRB2/sem-5/DRK family. As to quaternary structure, interacts with phosphorylated LIME1 upon TCR activation. Interacts with phosphorylated LAT and LAX1 upon TCR activation. Interacts with SHB. Interacts with PTPN23.

The protein localises to the nucleus. The protein resides in the cytoplasm. It localises to the endosome. Interacts with SLP-76 to regulate NF-AT activation. Binds to tyrosine-phosphorylated shc. The sequence is that of GRB2-related adapter protein 2 (GRAP2) from Homo sapiens (Human).